A 243-amino-acid chain; its full sequence is GTP cyclohydrolase 1 (243 aa).

The residue at position 15 (Thr-15) is a Phosphothreonine. The interval 18 to 55 is disordered; it reads NIRPTSPYTLNPPVERDGFSWPSVGTRQRAEETEEEEK. The residue at position 23 (Ser-23) is a Phosphoserine. Zn(2+) is bound by residues Cys-132, His-135, and Cys-203.

The protein belongs to the GTP cyclohydrolase I family. As to quaternary structure, homodimer.

It catalyses the reaction GTP + H2O = 7,8-dihydroneopterin 3'-triphosphate + formate + H(+). It participates in cofactor biosynthesis; 7,8-dihydroneopterin triphosphate biosynthesis; 7,8-dihydroneopterin triphosphate from GTP: step 1/1. Its function is as follows. GTP cyclohydrolase 1 is the first enzyme in the biosynthetic pathway leading to folic acid. The chain is GTP cyclohydrolase 1 from Saccharomyces cerevisiae (strain ATCC 204508 / S288c) (Baker's yeast).